The primary structure comprises 593 residues: ATP-dependent RNA helicase MRH4, mitochondrial (593 aa).

The transit peptide at 1–106 (MFPLRAQSAS…QLRIFPTVRA (106 aa)) directs the protein to the mitochondrion. A compositionally biased stretch (low complexity) spans 42–51 (GANGANRANG). The tract at residues 42 to 63 (GANGANRANGTNSSQPESQSSK) is disordered. The segment covering 52–63 (TNSSQPESQSSK) has biased composition (polar residues). A Q motif motif is present at residues 130-137 (VLKPTPIQ). The region spanning 181–399 (INSLQKLKVF…NRIFPTDDSI (219 aa)) is the Helicase ATP-binding domain. Position 194–201 (194–201 (AETGSGKT)) interacts with ATP. The DEAD box motif lies at 347 to 350 (DEAD). Positions 433 to 593 (ALAQALYAIT…NAVKRGIQMG (161 aa)) constitute a Helicase C-terminal domain.

It belongs to the DEAD box helicase family. MRH4 subfamily.

The protein resides in the mitochondrion. It catalyses the reaction ATP + H2O = ADP + phosphate + H(+). ATP-binding RNA helicase involved in mitochondrial RNA metabolism. Required for maintenance of mitochondrial DNA. The sequence is that of ATP-dependent RNA helicase MRH4, mitochondrial (MRH4) from Scheffersomyces stipitis (strain ATCC 58785 / CBS 6054 / NBRC 10063 / NRRL Y-11545) (Yeast).